The sequence spans 119 residues: MIRGVGIDSVEVERMKKIVEKGDKFAKRVLTPKEFEQYQQLKGKRKVEYLGGRFSLKESFSKAMGTGLGKYVGFQDIETLWDDLGHPVMTSTKFSGNIFPSITHDDHEIITVVVLEELN.

The Mg(2+) site is built by aspartate 8 and glutamate 58.

Belongs to the P-Pant transferase superfamily. AcpS family. Mg(2+) serves as cofactor.

It localises to the cytoplasm. It carries out the reaction apo-[ACP] + CoA = holo-[ACP] + adenosine 3',5'-bisphosphate + H(+). Its function is as follows. Transfers the 4'-phosphopantetheine moiety from coenzyme A to a Ser of acyl-carrier-protein. The chain is Holo-[acyl-carrier-protein] synthase from Lactobacillus johnsonii (strain CNCM I-12250 / La1 / NCC 533).